The following is a 261-amino-acid chain: Small ribosomal subunit protein uS2 (261 aa).

The segment at 222–261 (GKALREQDGEANEEQPISEEEKKEVLEEAMSEEDFEGDKE) is disordered. Composition is skewed to acidic residues over residues 230–239 (GEANEEQPIS) and 248–261 (EEAMSEEDFEGDKE).

The protein belongs to the universal ribosomal protein uS2 family.

The sequence is that of Small ribosomal subunit protein uS2 from Campylobacter lari (strain RM2100 / D67 / ATCC BAA-1060).